A 199-amino-acid polypeptide reads, in one-letter code: MAKVLVLYYSTYGHLETMANAVAEGARAAGATVDVKRVPETAPDEVAKAAHFKLDQAAPVATIADLEHYDAIIVGAPTRFGRIASQMAAFLDQAGGLWFRGALNGKVGAAFTSTATQHGGQETTLFSIITNLLHFGMVIVGLPYSHQGQMSMSEIVGGAPYGATTLAAGDGSRQPSEIDLAGARHQGELVAKTAAKLFG.

One can recognise a Flavodoxin-like domain in the interval 4–190 (VLVLYYSTYG…AGARHQGELV (187 aa)). FMN-binding positions include 10–15 (STYGHL) and 78–80 (TRF). Tyr-12 provides a ligand contact to NAD(+). Trp-98 provides a ligand contact to substrate. Residues 113–119 (STATQHG) and His-134 each bind FMN.

It belongs to the WrbA family. The cofactor is FMN.

The enzyme catalyses a quinone + NADH + H(+) = a quinol + NAD(+). The catalysed reaction is a quinone + NADPH + H(+) = a quinol + NADP(+). The sequence is that of NAD(P)H dehydrogenase (quinone) from Azorhizobium caulinodans (strain ATCC 43989 / DSM 5975 / JCM 20966 / LMG 6465 / NBRC 14845 / NCIMB 13405 / ORS 571).